We begin with the raw amino-acid sequence, 84 residues long: Cytochrome b559 subunit alpha (84 aa).

A helical transmembrane segment spans residues isoleucine 22–phenylalanine 36. Heme is bound at residue histidine 24.

This sequence belongs to the PsbE/PsbF family. In terms of assembly, heterodimer of an alpha subunit and a beta subunit. PSII is composed of 1 copy each of membrane proteins PsbA, PsbB, PsbC, PsbD, PsbE, PsbF, PsbH, PsbI, PsbJ, PsbK, PsbL, PsbM, PsbT, PsbX, PsbY, PsbZ, Psb30/Ycf12, at least 3 peripheral proteins of the oxygen-evolving complex and a large number of cofactors. It forms dimeric complexes. It depends on heme b as a cofactor.

It localises to the plastid. The protein resides in the chloroplast thylakoid membrane. Functionally, this b-type cytochrome is tightly associated with the reaction center of photosystem II (PSII). PSII is a light-driven water:plastoquinone oxidoreductase that uses light energy to abstract electrons from H(2)O, generating O(2) and a proton gradient subsequently used for ATP formation. It consists of a core antenna complex that captures photons, and an electron transfer chain that converts photonic excitation into a charge separation. This is Cytochrome b559 subunit alpha from Emiliania huxleyi (Coccolithophore).